The primary structure comprises 307 residues: Isethionate sulfite-lyase activating enzyme (307 aa).

The region spanning 22-307 is the Radical SAM core domain; that stretch reads HDGPGIRTVV…EAVVAQTADS (286 aa). 11 residues coordinate [4Fe-4S] cluster: Cys-36, Cys-40, Cys-43, Cys-62, Cys-68, Cys-71, Cys-75, Cys-95, Cys-98, Cys-102, and Cys-106. Residue 42–44 coordinates S-adenosyl-L-methionine; it reads WCS. 4Fe-4S ferredoxin-type domains are found at residues 53-85 and 86-117; these read VELAYNTGRCLTLAKCVRCVEICTAGAISRAED and DTISIDRALCNDCEQLCSGACPSNALITYGAH. S-adenosyl-L-methionine is bound by residues Gly-146, 195-197, and His-268; that span reads DIK.

It belongs to the organic radical-activating enzymes family. Monomer. It depends on [4Fe-4S] cluster as a cofactor.

It carries out the reaction glycyl-[protein] + reduced [flavodoxin] + S-adenosyl-L-methionine = glycin-2-yl radical-[protein] + semiquinone [flavodoxin] + 5'-deoxyadenosine + L-methionine + H(+). It participates in organosulfur degradation; alkanesulfonate degradation. Functionally, involved in an anaerobic respiration pathway that converts the sulfonate isethionate (2-hydroxyethanesulfonate) to ammonia, acetate and sulfide. Catalyzes activation of the isethionate sulfite-lyase IseG under anaerobic conditions by generation of an organic free radical on a glycine residue, via a homolytic cleavage of S-adenosyl-L-methionine (SAM). This chain is Isethionate sulfite-lyase activating enzyme, found in Nitratidesulfovibrio vulgaris (strain ATCC 29579 / DSM 644 / CCUG 34227 / NCIMB 8303 / VKM B-1760 / Hildenborough) (Desulfovibrio vulgaris).